A 421-amino-acid polypeptide reads, in one-letter code: MEEYKVTLDGPAPWGFRLQGGKDFNMPLSISRLTPGGKSELAGVNVGDWLLQIEGDSTASMTHIEAQNKIRASSNKLGLVLSRFAVGANHPKGVHTPESQGRKYNFAPSTALNKIARPFGSGTPPPDNSRPVQVTKPVAYNPPPTSYPSSQMPQGQLQNGQKSRTVSNVSGKDTTDHPIPPAPSTGPAVRPPWTTDPTFADRYAPDKTTTVMTKHTQPATPTPAQSRNSILQAAQVPSSGDKTPVCSQCNKIIRGRFLLALGRYYHPEEFTCSQCHKVLEEGGFFEEKGSIFCPCCYDARFAPNCAKCKKKITGEIMHALKMTWHVPCFTCAYCKTPIRNRAFYMEDGKPYCEKDYEQMFGTKCRGCDFKIDAGDRFLEALGFSWHDTCFVCAICQINLEGKTFYSKKDKPLCKTHAFSNV.

Residues 1 to 85 (MEEYKVTLDG…KLGLVLSRFA (85 aa)) enclose the PDZ domain. The interval 115 to 193 (IARPFGSGTP…STGPAVRPPW (79 aa)) is disordered. Over residues 147-172 (YPSSQMPQGQLQNGQKSRTVSNVSGK) the composition is skewed to polar residues. 3 LIM zinc-binding domains span residues 244-302 (PVCS…ARFA), 303-362 (PNCA…MFGT), and 363-421 (KCRG…FSNV).

The protein localises to the cytoplasm. It is found in the cytoskeleton. Its function is as follows. May function as a scaffold on which the coordinated assembly of proteins can occur. May play a role as an adapter that, via its PDZ domain, localizes LIM-binding proteins to actin filaments of both skeletal muscle and nonmuscle tissues. This is PDZ and LIM domain protein 7 (pdlim7) from Xenopus laevis (African clawed frog).